Here is a 167-residue protein sequence, read N- to C-terminus: Phospholipase A and acyltransferase 1 (167 aa).

The Cytoplasmic portion of the chain corresponds to 1 to 138 (MAVNDCFSLT…GEGVSEQANR (138 aa)). The region spanning 20–135 (LIEVFRPCYQ…LRYGEGVSEQ (116 aa)) is the LRAT domain. Residue His30 is part of the active site. Cys119 serves as the catalytic Acyl-thioester intermediate. Residues 139-159 (AIGTIGLVAAGIDIFTFLGLF) traverse the membrane as a helical segment. Residues 160 to 167 (PKRQRTKY) are Lumenal-facing.

It belongs to the H-rev107 family. As to expression, expressed in skeletal muscle, heart, brain, bone marrow and testis. In terms of tissue distribution, abundantly expressed in brain, heart, and skeletal muscle.

The protein resides in the membrane. Its subcellular location is the cytoplasm. It localises to the nucleus. The catalysed reaction is a 1,2-diacyl-sn-glycero-3-phosphocholine + H2O = a 1-acyl-sn-glycero-3-phosphocholine + a fatty acid + H(+). The enzyme catalyses a 1,2-diacyl-sn-glycero-3-phosphocholine + H2O = a 2-acyl-sn-glycero-3-phosphocholine + a fatty acid + H(+). It carries out the reaction 1,2-dihexadecanoyl-sn-glycero-3-phosphocholine + H2O = 2-hexadecanoyl-sn-glycero-3-phosphocholine + hexadecanoate + H(+). It catalyses the reaction 1,2-dihexadecanoyl-sn-glycero-3-phosphocholine + H2O = 1-hexadecanoyl-sn-glycero-3-phosphocholine + hexadecanoate + H(+). The catalysed reaction is 1-hexadecanoyl-2-(5Z,8Z,11Z,14Z-eicosatetraenoyl)-sn-glycero-3-phosphoethanolamine + H2O = 2-(5Z,8Z,11Z,14Z)-eicosatetraenoyl-sn-glycero-3-phosphoethanolamine + hexadecanoate + H(+). The enzyme catalyses 1-hexadecanoyl-2-(5Z,8Z,11Z,14Z-eicosatetraenoyl)-sn-glycero-3-phosphoethanolamine + H2O = 1-hexadecanoyl-sn-glycero-3-phosphoethanolamine + (5Z,8Z,11Z,14Z)-eicosatetraenoate + H(+). It carries out the reaction 1,2-di-(9Z-octadecenoyl)-sn-glycero-3-phosphoethanolamine + 1,2-dihexadecanoyl-sn-glycero-3-phosphocholine = hexadecanoyl-sn-glycero-3-phosphocholine + N-hexadecanoyl-1,2-di-(9Z-octadecenoyl)-sn-glycero-3-phosphoethanolamine + H(+). It catalyses the reaction 1,2-dihexadecanoyl-sn-glycero-3-phosphocholine + a 2-acyl-sn-glycero-3-phosphocholine = a 1-hexadecanoyl-2-acyl-sn-glycero-3-phosphocholine + 2-hexadecanoyl-sn-glycero-3-phosphocholine. Its function is as follows. Exhibits both phospholipase A1/2 and acyltransferase activities. Shows phospholipase A1 (PLA1) and A2 (PLA2) activity, catalyzing the calcium-independent release of fatty acids from the sn-1 or sn-2 position of glycerophospholipids. Shows O-acyltransferase activity, catalyzing the transfer of a fatty acyl group from glycerophospholipid to the hydroxyl group of lysophospholipid. Shows N-acyltransferase activity, catalyzing the calcium-independent transfer of a fatty acyl group at the sn-1 position of phosphatidylcholine (PC) and other glycerophospholipids to the primary amine of phosphatidylethanolamine (PE), forming N-acylphosphatidylethanolamine (NAPE), which serves as precursor for N-acylethanolamines (NAEs). This is Phospholipase A and acyltransferase 1 from Mus musculus (Mouse).